The following is an 840-amino-acid chain: Sorting nexin-25 (840 aa).

The PXA domain maps to 1–164 (MDKALKEVFD…MLLAQLAYRE (164 aa)). In terms of domain architecture, RGS spans 287–401 (QFEDILANTF…IVSDLYEKLL (115 aa)). A coiled-coil region spans residues 434 to 499 (TNQINEQASF…RTDLQLHMAR (66 aa)). The PX domain maps to 508–628 (GMWKASITSG…AFLSPSPDYL (121 aa)). Ser665 bears the Phosphoserine mark.

It belongs to the sorting nexin family.

It is found in the endosome membrane. In terms of biological role, may be involved in several stages of intracellular trafficking. The protein is Sorting nexin-25 (SNX25) of Homo sapiens (Human).